Consider the following 517-residue polypeptide: L-amino-acid oxidase (517 aa).

The N-terminal stretch at 1–18 is a signal peptide; that stretch reads MNVFFMFSLLFLAALESC. The cysteines at positions 29 and 192 are disulfide-linked. Residues 62–63, 82–83, R90, and 106–109 contribute to the FAD site; these read MA, EA, and GPMR. R109 serves as a coordination point for substrate. N191 carries an N-linked (GlcNAc...) asparagine glycan. Residue V280 coordinates FAD. C350 and C431 are disulfide-bonded. Y391 is a binding site for substrate. FAD contacts are provided by residues E476 and 483–488; that span reads GWIDST. Residue 483-484 coordinates substrate; sequence GW.

The protein belongs to the flavin monoamine oxidase family. FIG1 subfamily. In terms of assembly, homodimer; non-covalently linked. Requires FAD as cofactor. In terms of processing, N-glycosylated. In terms of tissue distribution, expressed by the venom gland.

It is found in the secreted. The enzyme catalyses an L-alpha-amino acid + O2 + H2O = a 2-oxocarboxylate + H2O2 + NH4(+). In terms of biological role, catalyzes an oxidative deamination of predominantly hydrophobic and aromatic L-amino acids, thus producing hydrogen peroxide that may contribute to the diverse toxic effects of this enzyme. Exhibits diverse biological activities, such as hemorrhage, hemolysis, edema, apoptosis of vascular endothelial cells or tumor cell lines, antibacterial and antiparasitic activities, as well as regulation of platelet aggregation. Its effect on platelets is controversial, since it either induces aggregation or inhibits agonist-induced aggregation. These different effects are probably due to different experimental conditions. In Demansia vestigiata (Lesser black whip snake), this protein is L-amino-acid oxidase.